Reading from the N-terminus, the 165-residue chain is NADH-quinone oxidoreductase subunit I (165 aa).

2 consecutive 4Fe-4S ferredoxin-type domains span residues 57–86 (RRYENGEERCIACKLCEAVCPALAITIESD) and 96–125 (SRYDIDLTKCIFCGFCEESCPVDSIVETHI). [4Fe-4S] cluster is bound by residues cysteine 66, cysteine 69, cysteine 72, cysteine 76, cysteine 105, cysteine 108, cysteine 111, and cysteine 115.

The protein belongs to the complex I 23 kDa subunit family. As to quaternary structure, NDH-1 is composed of 14 different subunits. Subunits NuoA, H, J, K, L, M, N constitute the membrane sector of the complex. It depends on [4Fe-4S] cluster as a cofactor.

It localises to the cell inner membrane. It catalyses the reaction a quinone + NADH + 5 H(+)(in) = a quinol + NAD(+) + 4 H(+)(out). Functionally, NDH-1 shuttles electrons from NADH, via FMN and iron-sulfur (Fe-S) centers, to quinones in the respiratory chain. The immediate electron acceptor for the enzyme in this species is believed to be ubiquinone. Couples the redox reaction to proton translocation (for every two electrons transferred, four hydrogen ions are translocated across the cytoplasmic membrane), and thus conserves the redox energy in a proton gradient. This chain is NADH-quinone oxidoreductase subunit I, found in Polaromonas naphthalenivorans (strain CJ2).